A 329-amino-acid chain; its full sequence is Cytosolic sulfotransferase 6 (329 aa).

74–79 (KCGTTW) provides a ligand contact to 3'-phosphoadenylyl sulfate. Histidine 140 acts as the Proton acceptor in catalysis. 3'-phosphoadenylyl sulfate contacts are provided by residues arginine 162, serine 170, and 295–297 (RKG).

It belongs to the sulfotransferase 1 family.

Its subcellular location is the cytoplasm. Its function is as follows. Sulfotransferase that utilizes 3'-phospho-5'-adenylyl sulfate (PAPS) as sulfonate donor. This Arabidopsis thaliana (Mouse-ear cress) protein is Cytosolic sulfotransferase 6 (SOT6).